We begin with the raw amino-acid sequence, 767 residues long: 5-methyltetrahydropteroyltriglutamate--homocysteine methyltransferase (767 aa).

Residues 16–19 (RELK) and lysine 122 each bind 5-methyltetrahydropteroyltri-L-glutamate. L-homocysteine is bound by residues 443 to 445 (IGS) and glutamate 496. Residues 443 to 445 (IGS) and glutamate 496 contribute to the L-methionine site. 5-methyltetrahydropteroyltri-L-glutamate-binding positions include 527–528 (RC) and tryptophan 573. Aspartate 611 is an L-homocysteine binding site. Aspartate 611 serves as a coordination point for L-methionine. Glutamate 617 is a 5-methyltetrahydropteroyltri-L-glutamate binding site. Zn(2+) contacts are provided by histidine 653, cysteine 655, and glutamate 677. Histidine 706 (proton donor) is an active-site residue. Cysteine 738 lines the Zn(2+) pocket.

The protein belongs to the vitamin-B12 independent methionine synthase family. Requires Zn(2+) as cofactor.

The enzyme catalyses 5-methyltetrahydropteroyltri-L-glutamate + L-homocysteine = tetrahydropteroyltri-L-glutamate + L-methionine. The protein operates within amino-acid biosynthesis; L-methionine biosynthesis via de novo pathway; L-methionine from L-homocysteine (MetE route): step 1/1. In terms of biological role, catalyzes the transfer of a methyl group from 5-methyltetrahydrofolate to homocysteine resulting in methionine formation. This is 5-methyltetrahydropteroyltriglutamate--homocysteine methyltransferase from Ectopseudomonas mendocina (strain ymp) (Pseudomonas mendocina).